The primary structure comprises 396 residues: 1-deoxy-D-xylulose 5-phosphate reductoisomerase (396 aa).

Positions 10, 11, 12, 13, 38, and 124 each coordinate NADPH. Lys-125 is a 1-deoxy-D-xylulose 5-phosphate binding site. An NADPH-binding site is contributed by Glu-126. Asp-150 contacts Mn(2+). 4 residues coordinate 1-deoxy-D-xylulose 5-phosphate: Ser-151, Glu-152, Ser-179, and His-202. Residue Glu-152 coordinates Mn(2+). Gly-208 lines the NADPH pocket. Residues Ser-215, Asn-220, Lys-221, and Glu-224 each coordinate 1-deoxy-D-xylulose 5-phosphate. Residue Glu-224 coordinates Mn(2+).

The protein belongs to the DXR family. It depends on Mg(2+) as a cofactor. Mn(2+) serves as cofactor.

It catalyses the reaction 2-C-methyl-D-erythritol 4-phosphate + NADP(+) = 1-deoxy-D-xylulose 5-phosphate + NADPH + H(+). The protein operates within isoprenoid biosynthesis; isopentenyl diphosphate biosynthesis via DXP pathway; isopentenyl diphosphate from 1-deoxy-D-xylulose 5-phosphate: step 1/6. Functionally, catalyzes the NADPH-dependent rearrangement and reduction of 1-deoxy-D-xylulose-5-phosphate (DXP) to 2-C-methyl-D-erythritol 4-phosphate (MEP). This Ralstonia pickettii (strain 12J) protein is 1-deoxy-D-xylulose 5-phosphate reductoisomerase.